The following is a 206-amino-acid chain: MSGTLILVRHGQSEWNLKNLFTGWRDPGLSELGHEEATSAGRKIKDRGLRPDIAFTSVLSRAKVTNTHILEVLGLPALETIEDVALNERDYGDLSGLNKDDARKKWGEEQVHIWRRSYDIPPPGGESLRDTGARVWPYYLREILPQVLRGKTVLVSAHGNSLRSLAMVLDGLSGEEIVKMEIATGVPIVYRLNPDSTVASKEILEG.

Substrate contacts are provided by residues 9–16, 22–23, R61, 88–91, K99, 115–116, and 159–160; these read RHGQSEWN, TG, ERDY, RR, and GN. The active-site Tele-phosphohistidine intermediate is the H10. The active-site Proton donor/acceptor is E88.

This sequence belongs to the phosphoglycerate mutase family. BPG-dependent PGAM subfamily. As to quaternary structure, homodimer.

The catalysed reaction is (2R)-2-phosphoglycerate = (2R)-3-phosphoglycerate. Its pathway is carbohydrate degradation; glycolysis; pyruvate from D-glyceraldehyde 3-phosphate: step 3/5. In terms of biological role, catalyzes the interconversion of 2-phosphoglycerate and 3-phosphoglycerate. The protein is 2,3-bisphosphoglycerate-dependent phosphoglycerate mutase of Chelativorans sp. (strain BNC1).